Reading from the N-terminus, the 368-residue chain is Anhydro-N-acetylmuramic acid kinase (368 aa).

ATP is bound at residue 11 to 18; the sequence is GTSLDGID.

This sequence belongs to the anhydro-N-acetylmuramic acid kinase family.

It carries out the reaction 1,6-anhydro-N-acetyl-beta-muramate + ATP + H2O = N-acetyl-D-muramate 6-phosphate + ADP + H(+). Its pathway is amino-sugar metabolism; 1,6-anhydro-N-acetylmuramate degradation. The protein operates within cell wall biogenesis; peptidoglycan recycling. In terms of biological role, catalyzes the specific phosphorylation of 1,6-anhydro-N-acetylmuramic acid (anhMurNAc) with the simultaneous cleavage of the 1,6-anhydro ring, generating MurNAc-6-P. Is required for the utilization of anhMurNAc either imported from the medium or derived from its own cell wall murein, and thus plays a role in cell wall recycling. The chain is Anhydro-N-acetylmuramic acid kinase from Sulfurimonas denitrificans (strain ATCC 33889 / DSM 1251) (Thiomicrospira denitrificans (strain ATCC 33889 / DSM 1251)).